Here is a 1047-residue protein sequence, read N- to C-terminus: Probable alpha-mannosidase At5g66150 (1047 aa).

Positions 1-27 are cleaved as a signal peptide; it reads MEKPGMSLLKGSLCVIVFLLLLSLVES. Zn(2+) is bound by residues His56, Asp58, and Asp178. Asn280, Asn287, and Asn345 each carry an N-linked (GlcNAc...) asparagine glycan. A Zn(2+)-binding site is contributed by His419. Intrachain disulfides connect Cys455/Cys465 and Cys476/Cys484. N-linked (GlcNAc...) asparagine glycans are attached at residues Asn480, Asn508, Asn541, Asn605, Asn606, Asn668, Asn780, and Asn857. Residues Cys855 and Cys860 are joined by a disulfide bond.

This sequence belongs to the glycosyl hydrolase 38 family. In terms of assembly, homodimer. Requires Zn(2+) as cofactor.

It localises to the vacuole. The catalysed reaction is Hydrolysis of terminal, non-reducing alpha-D-mannose residues in alpha-D-mannosides.. In terms of biological role, liberates mannose from p-nitrophenyl-alpha-D-mannoside in vitro. This Arabidopsis thaliana (Mouse-ear cress) protein is Probable alpha-mannosidase At5g66150.